The primary structure comprises 131 residues: Hypocretin neuropeptide precursor (131 aa).

Residues 1 to 33 (MNPPFAKVSWATVTLLLLLLLLPPAVLSPGAAA) form the signal peptide. Glutamine 34 is modified (pyrrolidone carboxylic acid). Disulfide bonds link cysteine 39/cysteine 45 and cysteine 40/cysteine 47. A Leucine amide modification is found at leucine 66. Methionine 97 carries the post-translational modification Methionine amide. Positions 98-131 (GRRAGAEPAPRLCPGRRCLAAAASSVAPGGRSGI) are cleaved as a propeptide — removed in mature form.

Belongs to the orexin family. Specific enzymatic cleavages at paired basic residues yield the different active peptides.

Its subcellular location is the rough endoplasmic reticulum. It is found in the cytoplasmic vesicle. The protein localises to the synapse. Its function is as follows. Neuropeptides that play a significant role in the regulation of food intake and sleep-wakefulness, possibly by coordinating the complex behavioral and physiologic responses of these complementary homeostatic functions. A broader role in the homeostatic regulation of energy metabolism, autonomic function, hormonal balance and the regulation of body fluids, is also suggested. Binds to orexin receptors HCRTR1/OX1R and HCRTR2/OX2R with a high affinity. Stimulates food intake. Modulates pituitary luteinizing hormone secretion in an ovarian steroid-dependent manner. In terms of biological role, binds to orexin receptor HCRTR2/OX2R only. Stimulates food intake. Modulates pituitary luteinizing hormone secretion in an ovarian steroid-dependent manner. The sequence is that of Hypocretin neuropeptide precursor (HCRT) from Sus scrofa (Pig).